We begin with the raw amino-acid sequence, 179 residues long: Large ribosomal subunit protein uL5 (179 aa).

Belongs to the universal ribosomal protein uL5 family. As to quaternary structure, part of the 50S ribosomal subunit; part of the 5S rRNA/L5/L18/L25 subcomplex. Contacts the 5S rRNA and the P site tRNA. Forms a bridge to the 30S subunit in the 70S ribosome.

Functionally, this is one of the proteins that bind and probably mediate the attachment of the 5S RNA into the large ribosomal subunit, where it forms part of the central protuberance. In the 70S ribosome it contacts protein S13 of the 30S subunit (bridge B1b), connecting the 2 subunits; this bridge is implicated in subunit movement. Contacts the P site tRNA; the 5S rRNA and some of its associated proteins might help stabilize positioning of ribosome-bound tRNAs. The sequence is that of Large ribosomal subunit protein uL5 from Prochlorococcus marinus (strain NATL1A).